The chain runs to 253 residues: Imidazole glycerol phosphate synthase subunit HisF (253 aa).

Active-site residues include aspartate 11 and aspartate 130.

This sequence belongs to the HisA/HisF family. Heterodimer of HisH and HisF.

The protein resides in the cytoplasm. It catalyses the reaction 5-[(5-phospho-1-deoxy-D-ribulos-1-ylimino)methylamino]-1-(5-phospho-beta-D-ribosyl)imidazole-4-carboxamide + L-glutamine = D-erythro-1-(imidazol-4-yl)glycerol 3-phosphate + 5-amino-1-(5-phospho-beta-D-ribosyl)imidazole-4-carboxamide + L-glutamate + H(+). The protein operates within amino-acid biosynthesis; L-histidine biosynthesis; L-histidine from 5-phospho-alpha-D-ribose 1-diphosphate: step 5/9. Its function is as follows. IGPS catalyzes the conversion of PRFAR and glutamine to IGP, AICAR and glutamate. The HisF subunit catalyzes the cyclization activity that produces IGP and AICAR from PRFAR using the ammonia provided by the HisH subunit. In Geobacter sulfurreducens (strain ATCC 51573 / DSM 12127 / PCA), this protein is Imidazole glycerol phosphate synthase subunit HisF.